The primary structure comprises 450 residues: F-box/FBD/LRR-repeat protein At5g22660 (450 aa).

The F-box domain maps to 12 to 58; sequence EDRISSLPDHLLSQILSNLPTENAVTTSILSTRWKDLWLSTPVLDID. LRR repeat units lie at residues 157-181 and 294-317; these read LPNLKVMHLEENIYSYAETMEKFIS and LSSLRDMTISGTTLKIICHYLKHE. Positions 364 to 416 constitute an FBD domain; that stretch reads EEISLSSSVPKCLQSSLENVEIIRPNYGSGEEMKLSKYFLENSLVLKKFKLCR.

This Arabidopsis thaliana (Mouse-ear cress) protein is F-box/FBD/LRR-repeat protein At5g22660.